Reading from the N-terminus, the 427-residue chain is Trigger factor (427 aa).

Residues 163-248 (GDTVVIDFVG…IHEVKTKEVP (86 aa)) form the PPIase FKBP-type domain.

This sequence belongs to the FKBP-type PPIase family. Tig subfamily.

It is found in the cytoplasm. It carries out the reaction [protein]-peptidylproline (omega=180) = [protein]-peptidylproline (omega=0). Its function is as follows. Involved in protein export. Acts as a chaperone by maintaining the newly synthesized protein in an open conformation. Functions as a peptidyl-prolyl cis-trans isomerase. This is Trigger factor from Streptococcus pyogenes serotype M49 (strain NZ131).